Consider the following 666-residue polypeptide: Pantothenate kinase 1 (666 aa).

This sequence belongs to the type II pantothenate kinase family.

The catalysed reaction is (R)-pantothenate + ATP = (R)-4'-phosphopantothenate + ADP + H(+). It functions in the pathway cofactor biosynthesis; coenzyme A biosynthesis; CoA from (R)-pantothenate: step 1/5. Regulated by feedback inhibition by malonyl-CoA. Functionally, catalyzes the phosphorylation of pantothenate the first step in CoA biosynthesis. May play a role in the physiological regulation of the intracellular CoA concentration. The polypeptide is Pantothenate kinase 1 (Oryza sativa subsp. japonica (Rice)).